The chain runs to 652 residues: Bifunctional protein ThiO/ThiG (652 aa).

The interval 1-366 (MTRDIVIIGG…HYSRFQKQAS (366 aa)) is thiO. FAD-binding positions include 5 to 19 (IVII…AIAV) and 44 to 46 (AGM). Glu52 serves as a coordination point for glycine. Val173 contacts FAD. Residues Arg301 and Arg327 each coordinate glycine. 325 to 331 (HYRNGIL) provides a ligand contact to FAD. Positions 393-652 (SLIIAGKSFH…ASSPVTGTIS (260 aa)) are thiG. Lys494 functions as the Schiff-base intermediate with DXP in the catalytic mechanism. Residues Gly555, 581 to 582 (AG), and 603 to 604 (NS) contribute to the 1-deoxy-D-xylulose 5-phosphate site.

This sequence in the N-terminal section; belongs to the DAO family. ThiO subfamily. In the C-terminal section; belongs to the ThiG family. Interacts with ThiH and ThiS. The cofactor is FAD.

The protein localises to the cytoplasm. It catalyses the reaction glycine + O2 + H2O = glyoxylate + H2O2 + NH4(+). The enzyme catalyses [ThiS sulfur-carrier protein]-C-terminal-Gly-aminoethanethioate + 2-iminoacetate + 1-deoxy-D-xylulose 5-phosphate = [ThiS sulfur-carrier protein]-C-terminal Gly-Gly + 2-[(2R,5Z)-2-carboxy-4-methylthiazol-5(2H)-ylidene]ethyl phosphate + 2 H2O + H(+). It functions in the pathway cofactor biosynthesis; thiamine diphosphate biosynthesis. Catalyzes the FAD-dependent oxidative deamination of glycine. Is essential for thiamine biosynthesis since the oxidation of glycine catalyzed by ThiO generates the glycine imine intermediate (dehydroglycine) required for the biosynthesis of the thiazole ring of thiamine pyrophosphate. Its function is as follows. Catalyzes the rearrangement of 1-deoxy-D-xylulose 5-phosphate (DXP) to produce the thiazole phosphate moiety of thiamine. Sulfur is provided by the thiocarboxylate moiety of the carrier protein ThiS. In vitro, sulfur can be provided by H(2)S. This chain is Bifunctional protein ThiO/ThiG (thiO/thiG), found in Trichormus variabilis (strain ATCC 29413 / PCC 7937) (Anabaena variabilis).